The following is a 359-amino-acid chain: Chondroadherin (359 aa).

A signal peptide spans Met-1–Ala-22. Cys-23 and Cys-38 are joined by a disulfide. An LRRNT domain is found at Cys-23–Lys-52. LRR repeat units follow at residues Asn-76–Gly-97, Gln-100–Asp-121, Glu-124–Pro-145, Asn-148–Gly-169, Asp-172–Asp-193, Asn-196–Lys-217, Val-220–Ser-241, Tyr-245–Gly-266, and Thr-269–Asp-290. Ser-144 carries O-linked (GalNAc...) serine glycosylation. Positions Asn-300–Phe-348 constitute an LRRCT domain. 2 cysteine pairs are disulfide-bonded: Cys-304-Cys-346 and Cys-306-Cys-326.

Belongs to the small leucine-rich proteoglycan (SLRP) family. SLRP class IV subfamily. As to quaternary structure, mostly monomeric. Interacts with collagen type II. As to expression, present in chondrocytes at all ages.

It localises to the secreted. The protein localises to the extracellular space. The protein resides in the extracellular matrix. Promotes attachment of chondrocytes, fibroblasts, and osteoblasts. This binding is mediated (at least for chondrocytes and fibroblasts) by the integrin alpha(2)beta(1). May play an important role in the regulation of chondrocyte growth and proliferation. This chain is Chondroadherin (CHAD), found in Homo sapiens (Human).